A 256-amino-acid chain; its full sequence is Trans-aconitate 2-methyltransferase (256 aa).

Belongs to the methyltransferase superfamily. Tam family.

Its subcellular location is the cytoplasm. It carries out the reaction trans-aconitate + S-adenosyl-L-methionine = (E)-3-(methoxycarbonyl)pent-2-enedioate + S-adenosyl-L-homocysteine. Catalyzes the S-adenosylmethionine monomethyl esterification of trans-aconitate. This Rhodopseudomonas palustris (strain BisB18) protein is Trans-aconitate 2-methyltransferase.